The chain runs to 403 residues: RNA-binding motif, single-stranded-interacting protein 1 (403 aa).

Positions 30–56 (PAHPMAPPSPSTTSSNNNSSSSSNSGW) are disordered. Low complexity predominate over residues 40–54 (STTSSNNNSSSSSNS). RRM domains lie at 62-135 (TNLY…MAKQ) and 141-226 (TNLY…FADG). Phosphothreonine is present on Thr208. Residues 382–395 (GQQQVAVETSNDHS) show a composition bias toward polar residues. The disordered stretch occupies residues 382-403 (GQQQVAVETSNDHSPYTFPPNK).

As to expression, ubiquitous. Expressed in all tissues except testis.

The protein localises to the nucleus. Its function is as follows. Single-stranded DNA binding protein that interacts with the region upstream of the MYC gene. Binds specifically to the DNA sequence motif 5'-[AT]CT[AT][AT]T-3'. Probably has a role in DNA replication. This chain is RNA-binding motif, single-stranded-interacting protein 1 (Rbms1), found in Mus musculus (Mouse).